Here is a 111-residue protein sequence, read N- to C-terminus: Putative single-stranded DNA-binding protein ycf41 (111 aa).

Positions 1 to 98 (MNSCTLLVQI…FSTSRIFKYK (98 aa)) constitute an SSB domain.

It is found in the plastid. The protein localises to the chloroplast. The sequence is that of Putative single-stranded DNA-binding protein ycf41 (ycf41) from Pyropia yezoensis (Susabi-nori).